We begin with the raw amino-acid sequence, 410 residues long: MASNIMQRCNVFMSERVKLHAAMLALQFGYAGFHIVSRAALNMGVSKVVFPVYRNILALMLIGPCAYFLEKKERPALTLSFLIQFFLLALCGITGQSRILSLRIVLHIPTFASAIQNSVPAITFIMAAALRLEKVHISRRDGLAKIIGTVACVSGATIITLYKGPPITHIWRPNLEVTASYFKAFQGNDLSAKSENWTLGCIYLLGNCLAWSGWIVLQAPVLKRYPARLSVTSFTCFFGVIQFLIIAAFFETDLEHWKIHSGGELFTILYAGFVASGIAFSVQIWCIDRGGPVFVAVYQPVQTIAVAIMASIILGEQFYLGGIFGAILIIIGLYLVLWGKSEEKRLGLLQAKSSMVPENQPDNMDQSATLIINSSNGIKPNTSSSLTQPLLLDTSYKTVNIPSPSDEPQP.

Over M1–R16 the chain is Cytoplasmic. A helical membrane pass occupies residues V17–S37. Residues R38–K47 are Extracellular-facing. A helical transmembrane segment spans residues V48–F68. Over L69–R74 the chain is Cytoplasmic. A helical transmembrane segment spans residues P75–G95. The Extracellular segment spans residues Q96–P109. Residues T110 to L130 form a helical membrane-spanning segment. Residues R131–D141 lie on the Cytoplasmic side of the membrane. Residues G142–Y162 traverse the membrane as a helical segment. The Extracellular segment spans residues K163–N196. An N-linked (GlcNAc...) asparagine glycan is attached at N196. The helical transmembrane segment at W197 to L217 threads the bilayer. An EamA domain is found at L209–W338. At Q218 to L229 the chain is on the cytoplasmic side. A helical transmembrane segment spans residues S230–F250. The Extracellular segment spans residues E251 to E264. Residues L265–W285 form a helical membrane-spanning segment. The Cytoplasmic segment spans residues C286–P292. The chain crosses the membrane as a helical span at residues V293–I313. The Extracellular portion of the chain corresponds to L314 to Q317. The helical transmembrane segment at F318–W338 threads the bilayer. Residues G339–P410 lie on the Cytoplasmic side of the membrane.

This sequence belongs to the drug/metabolite transporter (DMT) superfamily. Plant drug/metabolite exporter (P-DME) (TC 2.A.7.4) family.

The protein localises to the membrane. In Pinus taeda (Loblolly pine), this protein is Auxin-induced protein 5NG4.